A 310-amino-acid polypeptide reads, in one-letter code: Coproporphyrin III ferrochelatase (310 aa).

A Fe-coproporphyrin III-binding site is contributed by Tyr13. Tyr13 contributes to the N-methylmesoporphyrin binding site. A Mg(2+)-binding site is contributed by Glu20. Arg30 lines the Fe-coproporphyrin III pocket. 31 to 33 provides a ligand contact to N-methylmesoporphyrin; it reads RGR. Arg46 is a Mg(2+) binding site. Residues 46–47, Ser54, and Tyr125 contribute to the Fe-coproporphyrin III site; that span reads RY. N-methylmesoporphyrin contacts are provided by His183 and Lys188. Fe(2+) is bound at residue His183. A Fe(2+)-binding site is contributed by Glu264. Asp268 and Glu272 together coordinate Mg(2+).

Belongs to the ferrochelatase family. In terms of assembly, monomer. Interacts with frataxin/Fra.

The protein resides in the cytoplasm. It carries out the reaction Fe-coproporphyrin III + 2 H(+) = coproporphyrin III + Fe(2+). The protein operates within porphyrin-containing compound metabolism; protoheme biosynthesis. Stimulated by Mg(2+). Inhibited by Cd(2+). Inhibited by N-methylmesoporphyrin (N-MeMP) and 2,4-disulfonic acid deuteroporphyrin IX (dSDP). Involved in coproporphyrin-dependent heme b biosynthesis. Catalyzes the insertion of ferrous iron into coproporphyrin III to form Fe-coproporphyrin III. It can also insert iron into protoporphyrin IX. Has weaker activity with 2,4 disulfonate, deuteroporphyrin and 2,4 hydroxyethyl. In vitro, can also use Zn(2+) or Cu(2+). This is Coproporphyrin III ferrochelatase from Bacillus subtilis (strain 168).